Consider the following 264-residue polypeptide: Thymidylate synthase (264 aa).

Arginine 21 provides a ligand contact to dUMP. Histidine 51 contacts (6R)-5,10-methylene-5,6,7,8-tetrahydrofolate. 126 to 127 (RR) contributes to the dUMP binding site. Cysteine 146 (nucleophile) is an active-site residue. DUMP is bound by residues 166–169 (RSAD), asparagine 177, and 207–209 (HLY). Aspartate 169 contacts (6R)-5,10-methylene-5,6,7,8-tetrahydrofolate. Alanine 263 is a binding site for (6R)-5,10-methylene-5,6,7,8-tetrahydrofolate.

Belongs to the thymidylate synthase family. Bacterial-type ThyA subfamily. In terms of assembly, homodimer.

It localises to the cytoplasm. The enzyme catalyses dUMP + (6R)-5,10-methylene-5,6,7,8-tetrahydrofolate = 7,8-dihydrofolate + dTMP. It functions in the pathway pyrimidine metabolism; dTTP biosynthesis. Functionally, catalyzes the reductive methylation of 2'-deoxyuridine-5'-monophosphate (dUMP) to 2'-deoxythymidine-5'-monophosphate (dTMP) while utilizing 5,10-methylenetetrahydrofolate (mTHF) as the methyl donor and reductant in the reaction, yielding dihydrofolate (DHF) as a by-product. This enzymatic reaction provides an intracellular de novo source of dTMP, an essential precursor for DNA biosynthesis. The sequence is that of Thymidylate synthase from Pseudomonas aeruginosa (strain LESB58).